Here is a 474-residue protein sequence, read N- to C-terminus: 6-phospho-beta-galactosidase (474 aa).

The D-galactose 6-phosphate site is built by Q19, H116, N159, E160, and N297. E160 (proton donor) is an active-site residue. E375 acts as the Nucleophile in catalysis. Residues S433, W434, K440, and Y442 each contribute to the D-galactose 6-phosphate site.

Belongs to the glycosyl hydrolase 1 family.

The catalysed reaction is a 6-phospho-beta-D-galactoside + H2O = D-galactose 6-phosphate + an alcohol. The protein operates within carbohydrate metabolism; lactose degradation; D-galactose 6-phosphate and beta-D-glucose from lactose 6-phosphate: step 1/1. This is 6-phospho-beta-galactosidase from Lacticaseibacillus casei (strain BL23) (Lactobacillus casei).